The primary structure comprises 270 residues: Ethanolamine ammonia-lyase small subunit (270 aa).

Positions 166, 187, and 216 each coordinate adenosylcob(III)alamin.

This sequence belongs to the EutC family. The basic unit is a heterodimer which dimerizes to form tetramers. The heterotetramers trimerize; 6 large subunits form a core ring with 6 small subunits projecting outwards. The cofactor is adenosylcob(III)alamin.

The protein localises to the bacterial microcompartment. The catalysed reaction is ethanolamine = acetaldehyde + NH4(+). It functions in the pathway amine and polyamine degradation; ethanolamine degradation. Functionally, catalyzes the deamination of various vicinal amino-alcohols to oxo compounds. Allows this organism to utilize ethanolamine as the sole source of nitrogen and carbon in the presence of external vitamin B12. The polypeptide is Ethanolamine ammonia-lyase small subunit (Ralstonia nicotianae (strain ATCC BAA-1114 / GMI1000) (Ralstonia solanacearum)).